Here is a 372-residue protein sequence, read N- to C-terminus: Alanine dehydrogenase 2 (372 aa).

His-95 is an active-site residue. 169 to 199 (KVTIIGGGQAGTNAAKIALGLGADVTILDVN) is an NAD(+) binding site.

The protein belongs to the AlaDH/PNT family.

The catalysed reaction is L-alanine + NAD(+) + H2O = pyruvate + NH4(+) + NADH + H(+). It functions in the pathway amino-acid degradation; L-alanine degradation via dehydrogenase pathway; NH(3) and pyruvate from L-alanine: step 1/1. In terms of biological role, may play a role in cell wall synthesis as L-alanine is an important constituent of the peptidoglycan layer. The protein is Alanine dehydrogenase 2 (ald2) of Staphylococcus aureus (strain MRSA252).